Reading from the N-terminus, the 302-residue chain is Probable 2-(5''-triphosphoribosyl)-3'-dephosphocoenzyme-A synthase (302 aa).

Belongs to the CitG/MdcB family.

The catalysed reaction is 3'-dephospho-CoA + ATP = 2'-(5''-triphospho-alpha-D-ribosyl)-3'-dephospho-CoA + adenine. This Albidiferax ferrireducens (strain ATCC BAA-621 / DSM 15236 / T118) (Rhodoferax ferrireducens) protein is Probable 2-(5''-triphosphoribosyl)-3'-dephosphocoenzyme-A synthase.